The chain runs to 124 residues: Small ribosomal subunit protein uS12 (124 aa).

Asp-89 carries the post-translational modification 3-methylthioaspartic acid. The segment at 104-124 (TAGVKDRRQSRSKYGAKTPKE) is disordered.

This sequence belongs to the universal ribosomal protein uS12 family. In terms of assembly, part of the 30S ribosomal subunit. Contacts proteins S8 and S17. May interact with IF1 in the 30S initiation complex.

In terms of biological role, with S4 and S5 plays an important role in translational accuracy. Interacts with and stabilizes bases of the 16S rRNA that are involved in tRNA selection in the A site and with the mRNA backbone. Located at the interface of the 30S and 50S subunits, it traverses the body of the 30S subunit contacting proteins on the other side and probably holding the rRNA structure together. The combined cluster of proteins S8, S12 and S17 appears to hold together the shoulder and platform of the 30S subunit. This chain is Small ribosomal subunit protein uS12, found in Parasynechococcus marenigrum (strain WH8102).